Consider the following 530-residue polypeptide: Netrin-G2 (530 aa).

A signal peptide spans 1-17 (MLHLLALFLHCLPLASG). 3 disulfides stabilise this stretch: Cys22/Cys39, Cys61/Cys81, and Cys69/Cys77. Residues 35 to 286 (EFYACQPKVM…AISNIEVIGR (252 aa)) enclose the Laminin N-terminal domain. The segment at 69–88 (CSHENPYLCSNECDASNPDL) is NGL discriminant loop I. N-linked (GlcNAc...) asparagine glycosylation is found at Asn122 and Asn128. Cys171 and Cys195 are disulfide-bonded. The interval 201–203 (RWA) is NGL discriminant loop II. The NGL discriminant loop III stretch occupies residues 264 to 267 (TYVQ). 15 disulfides stabilise this stretch: Cys287–Cys296, Cys289–Cys305, Cys307–Cys316, Cys319–Cys344, Cys353–Cys362, Cys355–Cys373, Cys376–Cys385, Cys388–Cys406, Cys409–Cys421, Cys411–Cys427, Cys429–Cys438, Cys441–Cys451, Cys456–Cys469, Cys463–Cys475, and Cys477–Cys486. Laminin EGF-like domains lie at 287–346 (CKCN…ACAT), 353–408 (CECY…VCIE), and 409–453 (CNCN…GCYP). A glycan (N-linked (GlcNAc...) asparagine) is linked at Asn310. An N-linked (GlcNAc...) asparagine glycan is attached at Asn395. Asn422 is a glycosylation site (N-linked (GlcNAc...) asparagine). Gly507 carries the GPI-anchor amidated glycine lipid modification. Residues 508 to 530 (AAPRPATLLGCLLLLGLAARLGR) constitute a propeptide, removed in mature form.

In terms of assembly, interacts with LRRC4. N-glycosylated.

Its subcellular location is the cell membrane. In terms of biological role, involved in controlling patterning and neuronal circuit formation at the laminar, cellular, subcellular and synaptic levels. Promotes neurite outgrowth of both axons and dendrites. This chain is Netrin-G2, found in Homo sapiens (Human).